Here is a 202-residue protein sequence, read N- to C-terminus: Small ribosomal subunit protein uS4 (202 aa).

A disordered region spans residues 22–43 (TRKSARRAYPPGQHGQNRKKRS). An S4 RNA-binding domain is found at 90-152 (MRLDNTVFRL…APSRKLVENN (63 aa)).

The protein belongs to the universal ribosomal protein uS4 family. As to quaternary structure, part of the 30S ribosomal subunit. Contacts protein S5. The interaction surface between S4 and S5 is involved in control of translational fidelity.

Its function is as follows. One of the primary rRNA binding proteins, it binds directly to 16S rRNA where it nucleates assembly of the body of the 30S subunit. In terms of biological role, with S5 and S12 plays an important role in translational accuracy. In Trichormus variabilis (strain ATCC 29413 / PCC 7937) (Anabaena variabilis), this protein is Small ribosomal subunit protein uS4.